Consider the following 614-residue polypeptide: Major facilitator superfamily domain-containing protein 6-like protein B (614 aa).

2 helical membrane-spanning segments follow: residues 41–61 (LGLG…VHLL) and 78–98 (FFIM…AFYP). Residues 177–191 (HQRFTDQFPSSSPLT) show a composition bias toward polar residues. A disordered region spans residues 177–243 (HQRFTDQFPS…PFATHPNVSH (67 aa)). The span at 205–227 (GSGKAQKANSSKSSASNSKQRSS) shows a compositional bias: low complexity. The next 9 helical transmembrane spans lie at 270–290 (IFLI…PLEW), 312–332 (LWIW…FLID), 345–365 (VSFH…LSTL), 393–413 (IVLT…IQNF), 425–445 (ELYM…LYFF), 457–477 (WMVV…SFLW), 480–500 (WSVV…WWAI), 520–540 (LRWL…GFII), and 546–566 (AVLY…FLLV).

It belongs to the major facilitator superfamily. MFSD6 family.

Its subcellular location is the membrane. The polypeptide is Major facilitator superfamily domain-containing protein 6-like protein B (mfsd6l-b) (Xenopus laevis (African clawed frog)).